We begin with the raw amino-acid sequence, 203 residues long: B-cell CLL/lymphoma 7 protein family member B-A (203 aa).

Disordered regions lie at residues 55–80 (KEKEKSKVSVGGEMQRKNFPSEESSD) and 94–148 (SNQS…EIME). Low complexity predominate over residues 109-129 (ADSSNNSSPPASEPVSPAPQS).

It belongs to the BCL7 family.

This chain is B-cell CLL/lymphoma 7 protein family member B-A (bcl7ba), found in Danio rerio (Zebrafish).